The following is a 383-amino-acid chain: L-lactate dehydrogenase (383 aa).

The FMN hydroxy acid dehydrogenase domain occupies 1-380; the sequence is MIISSTFDYR…THESLASTDA (380 aa). A substrate-binding site is contributed by Tyr24. Positions 106 and 127 each coordinate FMN. Substrate is bound at residue Tyr129. Thr155 contacts FMN. Residue Arg164 coordinates substrate. Lys251 provides a ligand contact to FMN. The active-site Proton acceptor is His275. Position 278 (Arg278) interacts with substrate. 306-330 is a binding site for FMN; sequence DSGVRSGLDVVRMIAQGADAVMIGR.

Belongs to the FMN-dependent alpha-hydroxy acid dehydrogenase family. FMN serves as cofactor.

It localises to the cell inner membrane. It catalyses the reaction (S)-lactate + A = pyruvate + AH2. Its function is as follows. Catalyzes the conversion of L-lactate to pyruvate. Is coupled to the respiratory chain. The protein is L-lactate dehydrogenase of Bartonella quintana (strain Toulouse) (Rochalimaea quintana).